The primary structure comprises 620 residues: 1-deoxy-D-xylulose-5-phosphate synthase (620 aa).

Residues His80 and 121 to 123 (GHS) each bind thiamine diphosphate. Residue Asp152 participates in Mg(2+) binding. Residues 153-154 (GA), Asn181, Tyr288, and Glu370 each bind thiamine diphosphate. A Mg(2+)-binding site is contributed by Asn181.

Belongs to the transketolase family. DXPS subfamily. In terms of assembly, homodimer. Requires Mg(2+) as cofactor. The cofactor is thiamine diphosphate.

It carries out the reaction D-glyceraldehyde 3-phosphate + pyruvate + H(+) = 1-deoxy-D-xylulose 5-phosphate + CO2. Its pathway is metabolic intermediate biosynthesis; 1-deoxy-D-xylulose 5-phosphate biosynthesis; 1-deoxy-D-xylulose 5-phosphate from D-glyceraldehyde 3-phosphate and pyruvate: step 1/1. Its function is as follows. Catalyzes the acyloin condensation reaction between C atoms 2 and 3 of pyruvate and glyceraldehyde 3-phosphate to yield 1-deoxy-D-xylulose-5-phosphate (DXP). The sequence is that of 1-deoxy-D-xylulose-5-phosphate synthase from Salmonella paratyphi A (strain ATCC 9150 / SARB42).